A 647-amino-acid polypeptide reads, in one-letter code: Paraneoplastic antigen Ma6E (647 aa).

Disordered regions lie at residues 111–199 (QPQG…AGGA), 227–254 (GAAGEAGGAGEAGAAGEAGGAGEGRAAG), 508–580 (AAAP…VPWG), and 608–647 (RGQEARKPPLEGLQTILEEPENEDEDGAGDEGQPKSSQGK). Gly residues-rich tracts occupy residues 122–149 (GEGGGAGEAGGVGEVGAAGEAGGTGEAG), 158–199 (GEAG…AGGA), and 227–251 (GAAGEAGGAGEAGAAGEAGGAGEGR). The segment covering 517–570 (PAAAQASPAQGNASEAGPGAEDAAEAASATKEAARGAPAAGEGESAPAGPEGLG) has biased composition (low complexity). A compositionally biased stretch (acidic residues) spans 625 to 636 (EEPENEDEDGAG).

The sequence is that of Paraneoplastic antigen Ma6E from Homo sapiens (Human).